A 1253-amino-acid polypeptide reads, in one-letter code: MPGPRGAAHGLAPAMRQAGALGLLALLLLALLGPGGGAEGGPAGERGTGGGGALARERFKVVFAPVICKRTCLKGQCRDSCQQGSNMTLIGENGHSTDTLTGSGFRVVVCPLPCMNGGQCSSRNQCLCPPDFTGRFCQVPAAGTGAGTGSSGPGLARTGAMSTGPLPPLAPEGESVASKHAIYAVQVIADPPGPGEGPPAQHAAFLVPLGPGQISAEVQAPPPVVNVRVHHPPEASVQVHRIEGPNAEGPASSQHLLPHPKPQHPRPPTQKPLGRCFQDTLPKQPCGSNPLPGLTKQEDCCGSIGTAWGQSKCHKCPQLQYTGVQKPGPVRGEVGADCPQGYKRLNSTHCQDINECAMPGMCRHGDCLNNPGSYRCVCPPGHSLGPSRTQCIADKPEEKSLCFRLVSTEHQCQHPLTTRLTRQLCCCSVGKAWGARCQRCPADGTAAFKEICPAGKGYHILTSHQTLTIQGESDFSLFLHPDGPPKPQQLPESPSRAPPLEDTEEERGVTMDPPVSEERSVQQSHPTTTTSPPRPYPELISRPSPPTFHRFLPDLPPSRSAVEIAPTQVTETDECRLNQNICGHGQCVPGPSDYSCHCNAGYRSHPQHRYCVDVNECEAEPCGPGKGICMNTGGSYNCHCNRGYRLHVGAGGRSCVDLNECTKPHLCGDGGFCINFPGHYKCNCYPGYRLKASRPPICEDIDECRDPSTCPDGKCENKPGSFKCIACQPGYRSQGGGACRDVNECSEGTPCSPGWCENLPGSYRCTCAQGYEPAQDGLSCIDVDECEAGKVCQDGICTNTPGSFQCQCLSGYHLSRDRSRCEDIDECDFPAACIGGDCINTNGSYRCLCPQGHRLVGGRKCQDIDECSQDPGLCLPHGACENLQGSYVCVCDEGFTLTQDQHGCEEVEQPHHKKECYLNFDDTVFCDSVLATNVTQQECCCSLGAGWGDHCEIYPCPVYSSAEFHSLCPDGKGYTQDNNIVNYGIPAHRDIDECILFGAEICKEGKCVNTQPGYECYCKQGFYYDGNLLECVDVDECLDESNCRNGVCENTRGGYRCACTPPAEYSPAQRQCLSPEEMEHAPERREVCWGQRGEDGMCMGPLAGPALTFDDCCCRQGRGWGTQCRPCPPRGTGSQCPTSQSESNSFWDTSPLLLGKSPRDEDSSEEDSDECRCVSGRCVPRPGGAVCECPGGFQLDASRARCVDIDECRELNQRGLLCKSERCVNTSGSFRCVCKAGFTRSRPHGACVPQRRR.

A signal peptide spans 1-38 (MPGPRGAAHGLAPAMRQAGALGLLALLLLALLGPGGGA). Asparagine 86 is a glycosylation site (N-linked (GlcNAc...) asparagine). The region spanning 106–138 (RVVVCPLPCMNGGQCSSRNQCLCPPDFTGRFCQ) is the EGF-like 1 domain. 3 disulfide bridges follow: cysteine 110/cysteine 120, cysteine 114/cysteine 126, and cysteine 128/cysteine 137. Residues 244-270 (GPNAEGPASSQHLLPHPKPQHPRPPTQ) form a disordered region. One can recognise a TB 1 domain in the interval 274 to 328 (GRCFQDTLPKQPCGSNPLPGLTKQEDCCGSIGTAWGQSKCHKCPQLQYTGVQKPG). 3 cysteine pairs are disulfide-bonded: cysteine 276–cysteine 300, cysteine 286–cysteine 313, and cysteine 301–cysteine 316. Asparagine 346 carries N-linked (GlcNAc...) asparagine glycosylation. Residues 352-392 (DINECAMPGMCRHGDCLNNPGSYRCVCPPGHSLGPSRTQCI) enclose the EGF-like 2; calcium-binding domain. Intrachain disulfides connect cysteine 356–cysteine 367, cysteine 362–cysteine 376, cysteine 378–cysteine 391, cysteine 402–cysteine 425, cysteine 412–cysteine 437, cysteine 426–cysteine 440, and cysteine 427–cysteine 452. In terms of domain architecture, TB 2 spans 400–452 (SLCFRLVSTEHQCQHPLTTRLTRQLCCCSVGKAWGARCQRCPADGTAAFKEIC). The tract at residues 475–555 (FSLFLHPDGP…PTFHRFLPDL (81 aa)) is disordered. Residues 571–612 (ETDECRLNQNICGHGQCVPGPSDYSCHCNAGYRSHPQHRYCV) form the EGF-like 3 domain. Intrachain disulfides connect cysteine 575–cysteine 587, cysteine 582–cysteine 596, cysteine 598–cysteine 611, cysteine 617–cysteine 629, cysteine 622–cysteine 638, cysteine 661–cysteine 673, cysteine 667–cysteine 682, cysteine 684–cysteine 698, cysteine 745–cysteine 756, cysteine 751–cysteine 765, cysteine 767–cysteine 780, cysteine 786–cysteine 797, cysteine 792–cysteine 806, cysteine 808–cysteine 821, cysteine 827–cysteine 838, cysteine 833–cysteine 847, cysteine 849–cysteine 861, cysteine 867–cysteine 880, cysteine 874–cysteine 889, cysteine 891–cysteine 904, cysteine 916–cysteine 939, cysteine 926–cysteine 951, cysteine 940–cysteine 956, cysteine 941–cysteine 968, cysteine 994–cysteine 1007, cysteine 1002–cysteine 1016, cysteine 1018–cysteine 1031, cysteine 1037–cysteine 1048, cysteine 1043–cysteine 1057, cysteine 1059–cysteine 1072, cysteine 1113–cysteine 1127, and cysteine 1114–cysteine 1136. In terms of domain architecture, EGF-like 4; calcium-binding spans 613 to 656 (DVNECEAEPCGPGKGICMNTGGSYNCHCNRGYRLHVGAGGRSCV). Residues 657–699 (DLNECTKPHLCGDGGFCINFPGHYKCNCYPGYRLKASRPPICE) enclose the EGF-like 5; calcium-binding domain. One can recognise an EGF-like 6; calcium-binding domain in the interval 741-781 (DVNECSEGTPCSPGWCENLPGSYRCTCAQGYEPAQDGLSCI). The EGF-like 7; calcium-binding domain occupies 782–822 (DVDECEAGKVCQDGICTNTPGSFQCQCLSGYHLSRDRSRCE). The EGF-like 8; calcium-binding domain occupies 823 to 861 (DIDECDFPAACIGGDCINTNGSYRCLCPQGHRLVGGRKC). Asparagine 842 carries N-linked (GlcNAc...) asparagine glycosylation. Residues 863 to 905 (DIDECSQDPGLCLPHGACENLQGSYVCVCDEGFTLTQDQHGCE) enclose the EGF-like 9; calcium-binding domain. The TB 3 domain occupies 914-968 (KECYLNFDDTVFCDSVLATNVTQQECCCSLGAGWGDHCEIYPCPVYSSAEFHSLC). Asparagine 933 carries N-linked (GlcNAc...) asparagine glycosylation. One can recognise an EGF-like 10; calcium-binding domain in the interval 990–1032 (DIDECILFGAEICKEGKCVNTQPGYECYCKQGFYYDGNLLECV). An EGF-like 11; calcium-binding domain is found at 1033–1072 (DVDECLDESNCRNGVCENTRGGYRCACTPPAEYSPAQRQC). The region spanning 1086 to 1136 (EVCWGQRGEDGMCMGPLAGPALTFDDCCCRQGRGWGTQCRPCPPRGTGSQC) is the TB 4 domain. The span at 1138 to 1148 (TSQSESNSFWD) shows a compositional bias: polar residues. The interval 1138-1169 (TSQSESNSFWDTSPLLLGKSPRDEDSSEEDSD) is disordered. One can recognise an EGF-like 12; calcium-binding domain in the interval 1204 to 1231 (DIDECRELNQRGLLCKSERCVNTSGSFR). 2 disulfides stabilise this stretch: cysteine 1208–cysteine 1223 and cysteine 1218–cysteine 1232. An N-linked (GlcNAc...) asparagine glycan is attached at asparagine 1225.

The protein belongs to the LTBP family. As to quaternary structure, forms part of the large latent transforming growth factor beta (TGFB1) precursor complex; removal is essential for activation of complex. Interacts with EFEMP2. Contains hydroxylated asparagine residues. Post-translationally, two intrachain disulfide bonds from the TB3 domain are rearranged upon TGFB1 binding, and form interchain bonds with TGFB1 propeptide, anchoring it to the extracellular matrix.

It is found in the secreted. It localises to the extracellular space. Its subcellular location is the extracellular matrix. Functionally, key regulator of transforming growth factor beta (TGFB1, TGFB2 and TGFB3) that controls TGF-beta activation by maintaining it in a latent state during storage in extracellular space. Associates specifically via disulfide bonds with the Latency-associated peptide (LAP), which is the regulatory chain of TGF-beta, and regulates integrin-dependent activation of TGF-beta. This is Latent-transforming growth factor beta-binding protein 3 (Ltbp3) from Mus musculus (Mouse).